Consider the following 123-residue polypeptide: Large ribosomal subunit protein bL12 (123 aa).

The protein belongs to the bacterial ribosomal protein bL12 family. Homodimer. Part of the ribosomal stalk of the 50S ribosomal subunit. Forms a multimeric L10(L12)X complex, where L10 forms an elongated spine to which 2 to 4 L12 dimers bind in a sequential fashion. Binds GTP-bound translation factors.

Forms part of the ribosomal stalk which helps the ribosome interact with GTP-bound translation factors. Is thus essential for accurate translation. This is Large ribosomal subunit protein bL12 from Geobacillus thermodenitrificans (strain NG80-2).